The primary structure comprises 285 residues: PHO85 cyclin-7 (285 aa).

The segment covering Met-1–Pro-14 has biased composition (low complexity). The interval Met-1 to Asn-42 is disordered. Ser-69 carries the post-translational modification Phosphoserine.

Belongs to the cyclin family. PHO80 subfamily. In terms of assembly, forms a cyclin-CDK complex with PHO85. Interacts with the substrate proteins MMR1 and YJL084C. Interacts with the CDK inhibitor (CKI) PHO81.

Its subcellular location is the cytoplasm. The PCL7-PHO85 cyclin-CDK is inhibited by PHO81 in low-phosphate conditions. Functionally, cyclin partner of the cyclin-dependent kinase (CDK) PHO85. Together with cyclin PCL6, controls glycogen phosphorylase and glycogen synthase activities in response to nutrient availablility. The PCL7-PHO85 cyclin-CDK holoenzyme has GLC8 kinase activity and phosphorylates and inactivates the phosphatase PP1-2 inhibitor GLC8, causing activation of PP1-2, which then dephosphorylates and activates glycogen phosphorylase. PCL7-PHO85 also phosphorylates MMR1 and YJL084C. This is PHO85 cyclin-7 (PCL7) from Saccharomyces cerevisiae (strain ATCC 204508 / S288c) (Baker's yeast).